Reading from the N-terminus, the 434-residue chain is Putative D-alanyl-D-alanine carboxypeptidase (434 aa).

A helical; Signal-anchor membrane pass occupies residues 7 to 25 (YLSLLAVSCSVSAAKYPVL).

The protein belongs to the peptidase S12 family. YfeW subfamily.

Its subcellular location is the cell inner membrane. The enzyme catalyses Preferential cleavage: (Ac)2-L-Lys-D-Ala-|-D-Ala. Also transpeptidation of peptidyl-alanyl moieties that are N-acyl substituents of D-alanine.. This is Putative D-alanyl-D-alanine carboxypeptidase from Escherichia coli O157:H7.